The sequence spans 606 residues: MGRLKQKGKAGAAKNYVTRTSAIKKLQCSLADFRRLCILKGIFPREPRSRKRANKGSSAPTSFYYAKDIAYLAHEPVLKKLREHKAFAKKLSRALGRGEWSSAKNLEENKPIYRLDHIIKERYPTFIDAVRDIDDALCMVFLFASLPTTTRLPPELMENCSRLAAEWQLYIMRSQSLRKVFLSIKGVYYQAEIMDQTVTWLVPYQFTQNIPADVDVRVMLTFLELYQTLLGFILFKLYTDAGLVYPPPLDAKKDESAAGIGAFSLQDITQPAAQPSRAKAVELDGRKISTKDVRQTIKNIEASHSTHDPDVEMSNPETATTEVEEEFISQASLSNPGLISSLPQSLSTSLFSPYTFFLSREVSRPIFEFMVRSFGGKIGWSASFGSGSPFEETDETITHVIIDRPLVGREESPSQRELRLRRKYVQPQWIVDCINSGKILLEGPYGQGKTLPPHLSPFGEYEGAYDPAAGPLGPSGVEQESESEADEVSEEDEEDQGGLVQAAVEAVTGDPVELRAAELAAEAAGVDYGTFEAKVKKLNKKQMKKPITDGVEDGEKDMNKMMMSNKQKKLYEKMKYSQKKKEIEVSKFGISLDAVLTSSIAGDTDY.

Residues 346 to 447 form the BRCT domain; it reads LSTSLFSPYT…KILLEGPYGQ (102 aa). The interval 461–497 is disordered; sequence YEGAYDPAAGPLGPSGVEQESESEADEVSEEDEEDQG. The segment covering 479 to 496 has biased composition (acidic residues); it reads QESESEADEVSEEDEEDQ.

This sequence belongs to the pescadillo family. In terms of assembly, component of the NOP7 complex, composed of ERB1, NOP7 and YTM1. The complex is held together by ERB1, which interacts with NOP7 via its N-terminal domain and with YTM1 via a high-affinity interaction between the seven-bladed beta-propeller domains of the 2 proteins. The NOP7 complex associates with the 66S pre-ribosome.

The protein resides in the nucleus. Its subcellular location is the nucleolus. The protein localises to the nucleoplasm. In terms of biological role, component of the NOP7 complex, which is required for maturation of the 25S and 5.8S ribosomal RNAs and formation of the 60S ribosome. This is Pescadillo homolog from Laccaria bicolor (strain S238N-H82 / ATCC MYA-4686) (Bicoloured deceiver).